The following is an 80-amino-acid chain: UPF0125 protein PD_1376 (80 aa).

Belongs to the UPF0125 (RnfH) family.

The sequence is that of UPF0125 protein PD_1376 from Xylella fastidiosa (strain Temecula1 / ATCC 700964).